Consider the following 159-residue polypeptide: SsrA-binding protein (159 aa).

Residues 134–159 (KLHDKRETSKERDWNRQKNRLLKERG) form a disordered region. The segment covering 137 to 159 (DKRETSKERDWNRQKNRLLKERG) has biased composition (basic and acidic residues).

This sequence belongs to the SmpB family.

The protein localises to the cytoplasm. Functionally, required for rescue of stalled ribosomes mediated by trans-translation. Binds to transfer-messenger RNA (tmRNA), required for stable association of tmRNA with ribosomes. tmRNA and SmpB together mimic tRNA shape, replacing the anticodon stem-loop with SmpB. tmRNA is encoded by the ssrA gene; the 2 termini fold to resemble tRNA(Ala) and it encodes a 'tag peptide', a short internal open reading frame. During trans-translation Ala-aminoacylated tmRNA acts like a tRNA, entering the A-site of stalled ribosomes, displacing the stalled mRNA. The ribosome then switches to translate the ORF on the tmRNA; the nascent peptide is terminated with the 'tag peptide' encoded by the tmRNA and targeted for degradation. The ribosome is freed to recommence translation, which seems to be the essential function of trans-translation. This is SsrA-binding protein from Sinorhizobium fredii (strain NBRC 101917 / NGR234).